The following is a 517-amino-acid chain: Bifunctional purine biosynthesis protein PurH (517 aa).

The region spanning 1–146 is the MGS-like domain; sequence MAPIALLSVS…KNHAHVAVLT (146 aa).

Belongs to the PurH family.

It carries out the reaction (6R)-10-formyltetrahydrofolate + 5-amino-1-(5-phospho-beta-D-ribosyl)imidazole-4-carboxamide = 5-formamido-1-(5-phospho-D-ribosyl)imidazole-4-carboxamide + (6S)-5,6,7,8-tetrahydrofolate. It catalyses the reaction IMP + H2O = 5-formamido-1-(5-phospho-D-ribosyl)imidazole-4-carboxamide. The protein operates within purine metabolism; IMP biosynthesis via de novo pathway; 5-formamido-1-(5-phospho-D-ribosyl)imidazole-4-carboxamide from 5-amino-1-(5-phospho-D-ribosyl)imidazole-4-carboxamide (10-formyl THF route): step 1/1. It functions in the pathway purine metabolism; IMP biosynthesis via de novo pathway; IMP from 5-formamido-1-(5-phospho-D-ribosyl)imidazole-4-carboxamide: step 1/1. In Prochlorococcus marinus (strain MIT 9303), this protein is Bifunctional purine biosynthesis protein PurH.